We begin with the raw amino-acid sequence, 60 residues long: Large ribosomal subunit protein uL30 (60 aa).

The protein belongs to the universal ribosomal protein uL30 family. Part of the 50S ribosomal subunit.

This is Large ribosomal subunit protein uL30 from Lactiplantibacillus plantarum (strain ATCC BAA-793 / NCIMB 8826 / WCFS1) (Lactobacillus plantarum).